Consider the following 429-residue polypeptide: Glutamate-1-semialdehyde 2,1-aminomutase 1 (429 aa).

Lysine 268 carries the N6-(pyridoxal phosphate)lysine modification.

This sequence belongs to the class-III pyridoxal-phosphate-dependent aminotransferase family. HemL subfamily. Homodimer. It depends on pyridoxal 5'-phosphate as a cofactor.

The protein resides in the cytoplasm. It catalyses the reaction (S)-4-amino-5-oxopentanoate = 5-aminolevulinate. Its pathway is porphyrin-containing compound metabolism; protoporphyrin-IX biosynthesis; 5-aminolevulinate from L-glutamyl-tRNA(Glu): step 2/2. In Staphylococcus haemolyticus (strain JCSC1435), this protein is Glutamate-1-semialdehyde 2,1-aminomutase 1.